A 263-amino-acid chain; its full sequence is Probable septum site-determining protein MinC (263 aa).

A disordered region spans residues 107–159 (LPPSGARERPLDIKDSAPRKPAEEPSPSAGEARPEPAKAEEKPAEPVSRPTKV). 2 stretches are compositionally biased toward basic and acidic residues: residues 112–129 (ARER…KPAE) and 138–150 (ARPE…EKPA).

Belongs to the MinC family. Interacts with MinD and FtsZ.

Its function is as follows. Cell division inhibitor that blocks the formation of polar Z ring septums. Rapidly oscillates between the poles of the cell to destabilize FtsZ filaments that have formed before they mature into polar Z rings. Prevents FtsZ polymerization. The sequence is that of Probable septum site-determining protein MinC from Pseudomonas aeruginosa (strain LESB58).